A 315-amino-acid polypeptide reads, in one-letter code: 3-oxoacyl-[acyl-carrier-protein] reductase 3, chloroplastic (315 aa).

The N-terminal 55 residues, 1–55, are a transit peptide targeting the chloroplast; it reads MATTVAATKLTSLKAVKKLGFREIRQVRQWTPLQSSMPHFGSRQSFATSTVVKAQ. An NADP(+)-binding site is contributed by 77-101; sequence VTGASRGIGKAIALSLGKAGCKVLV. Serine 209 contacts substrate. The active-site Proton acceptor is tyrosine 222.

The protein belongs to the short-chain dehydrogenases/reductases (SDR) family. Homotetramer.

It is found in the plastid. It localises to the chloroplast. The enzyme catalyses a (3R)-hydroxyacyl-[ACP] + NADP(+) = a 3-oxoacyl-[ACP] + NADPH + H(+). The protein operates within lipid metabolism; fatty acid biosynthesis. This is 3-oxoacyl-[acyl-carrier-protein] reductase 3, chloroplastic (bkr3) from Brassica napus (Rape).